The following is a 336-amino-acid chain: 4-aminobenzoate N-oxygenase (336 aa).

A 4-nitrobenzoate-binding site is contributed by Tyr-93. Fe cation is bound by residues Glu-101, Glu-136, His-139, and Glu-196. A 4-nitrobenzoate-binding site is contributed by Asn-200. Residues His-223, Glu-227, and His-230 each contribute to the Fe cation site.

It belongs to the AurF N-oxygenase family. Homodimer. It depends on Fe(2+) as a cofactor.

It carries out the reaction 4-aminobenzoate + AH2 + 2 O2 = 4-nitrobenzoate + A + 2 H2O. It functions in the pathway antibiotic biosynthesis. Involved in the biosynthesis of the polyketide antibiotic aureothin. Catalyzes the oxidation of p-aminobenzoate (pABA) to p-nitrobenzoate (pNBA), an unusual polyketide synthase starter unit. Reaction mechanism involves the generation of a peroxodiiron(III/III) intermediate, which effects the initial oxidation of p-aminobenzoate to p-hydroxylaminobenzoate (Ar-NHOH). Ar-NHOH is then probably directly converted to the fully oxidized p-nitrobenzoate via a four-electron N-oxidation, bypassing the formation of a nitroso compound. This Streptomyces thioluteus protein is 4-aminobenzoate N-oxygenase.